We begin with the raw amino-acid sequence, 213 residues long: MPGRGSLEDDPFDFLFKIILIGDSNVGKTCVVHRFQSGIFMDNQQNTIGVDFTVRSLNINGKKVKVQVWDTAGQERFRTITQSYYRSAHGAIIAYDITRRQSFESVPHWIYEAGKYGAANLMLMLMGNKSDLAEKRQILFEEACTLAEKHGLLAVLETSAKESHNVDEVFLLMAKELIARNTFHYHNESPRNSFILDSKPVLAPPEPDKSCLC.

Residues Ser24, Val26, Gly27, Lys28, Thr29, Cys30, Asp42, and Thr47 each contribute to the GTP site. Residue Thr29 coordinates Mg(2+). The Switch 1 motif lies at 37–52; that stretch reads SGIFMDNQQNTIGVDF. Thr47 and Asp70 together coordinate Mg(2+). Positions 72–87 match the Switch 2 motif; that stretch reads AGQERFRTITQSYYRS. GTP-binding residues include Gly73, Asn128, Lys129, Asp131, Ser159, Ala160, and Lys161. Residues Cys211 and Cys213 are each lipidated (S-geranylgeranyl cysteine). Cys213 carries the cysteine methyl ester modification.

This sequence belongs to the small GTPase superfamily. Rab family. It depends on Mg(2+) as a cofactor.

The protein resides in the cell membrane. It catalyses the reaction GTP + H2O = GDP + phosphate + H(+). Regulated by guanine nucleotide exchange factors (GEFs) which promote the exchange of bound GDP for free GTP. Regulated by GTPase activating proteins (GAPs) which increase the GTP hydrolysis activity. Inhibited by GDP dissociation inhibitors (GDIs). In terms of biological role, the small GTPases Rab are key regulators of intracellular membrane trafficking, from the formation of transport vesicles to their fusion with membranes. Rabs cycle between an inactive GDP-bound form and an active GTP-bound form that is able to recruit to membranes different set of downstream effectors directly responsible for vesicle formation, movement, tethering and fusion. This chain is Ras-related protein Rab-19 (rab19), found in Xenopus laevis (African clawed frog).